Reading from the N-terminus, the 81-residue chain is Photosystem I iron-sulfur center (81 aa).

4Fe-4S ferredoxin-type domains follow at residues 2-31 (SHSV…MIPW) and 39-68 (IASA…VRVY). The [4Fe-4S] cluster site is built by cysteine 11, cysteine 14, cysteine 17, cysteine 21, cysteine 48, cysteine 51, cysteine 54, and cysteine 58.

As to quaternary structure, the eukaryotic PSI reaction center is composed of at least 11 subunits. The cofactor is [4Fe-4S] cluster.

The protein resides in the plastid thylakoid membrane. The catalysed reaction is reduced [plastocyanin] + hnu + oxidized [2Fe-2S]-[ferredoxin] = oxidized [plastocyanin] + reduced [2Fe-2S]-[ferredoxin]. In terms of biological role, apoprotein for the two 4Fe-4S centers FA and FB of photosystem I (PSI); essential for photochemical activity. FB is the terminal electron acceptor of PSI, donating electrons to ferredoxin. The C-terminus interacts with PsaA/B/D and helps assemble the protein into the PSI complex. Required for binding of PsaD and PsaE to PSI. PSI is a plastocyanin-ferredoxin oxidoreductase, converting photonic excitation into a charge separation, which transfers an electron from the donor P700 chlorophyll pair to the spectroscopically characterized acceptors A0, A1, FX, FA and FB in turn. This Cuscuta obtusiflora (Peruvian dodder) protein is Photosystem I iron-sulfur center.